The primary structure comprises 210 residues: Large ribosomal subunit protein uL3 (210 aa).

The tract at residues 122-155 (NQKRNNFGRGPMSHGSKNHRAPGSIGAGTTPGRV) is disordered.

This sequence belongs to the universal ribosomal protein uL3 family. In terms of assembly, part of the 50S ribosomal subunit. Forms a cluster with proteins L14 and L19.

Its function is as follows. One of the primary rRNA binding proteins, it binds directly near the 3'-end of the 23S rRNA, where it nucleates assembly of the 50S subunit. The polypeptide is Large ribosomal subunit protein uL3 (Nostoc punctiforme (strain ATCC 29133 / PCC 73102)).